The sequence spans 165 residues: DELTA-actitoxin-Oor1a (165 aa).

The segment at 1–17 (ATFRVLAKVLAELGKVS) is N-terminal region. The phosphocholine site is built by serine 41, valine 74, serine 92, proline 94, and tyrosine 125. The interval 92 to 107 (SVPYDYNLYSNWWNVK) is trp-rich region, which is important for the binding to lipid membrane.

It belongs to the actinoporin family. Sea anemone subfamily. Octamer or nonamer in membranes. Monomer in the soluble state.

Its subcellular location is the secreted. The protein localises to the nematocyst. The protein resides in the target cell membrane. Functionally, pore-forming protein that forms cations-selective hydrophilic pores of around 1 nm and causes cardiac stimulation and cytolysis. Pore formation is a multi-step process that involves specific recognition of membrane sphingomyelin (but neither cholesterol nor phosphatidylcholine) using aromatic rich region and adjacent phosphocholine (POC) binding site, firm binding to the membrane (mainly driven by hydrophobic interactions) accompanied by the transfer of the N-terminal region to the lipid-water interface and finally pore formation after oligomerization of monomers. Cytolytic effects include red blood cells hemolysis, platelet aggregation and lysis, cytotoxic and cytostatic effects on fibroblasts. Lethality in mammals has been ascribed to severe vasospasm of coronary vessels, cardiac arrhythmia, and inotropic effects. This is DELTA-actitoxin-Oor1a from Oulactis orientalis (Japan anemone).